We begin with the raw amino-acid sequence, 524 residues long: Homeobox protein engrailed-like SMOX-2 (524 aa).

Residues 194 to 218 (SSSSSSSSSSSSSSSSSSCSTNSSS) form a disordered region. The segment at residues 423–482 (LKRPRTSFTVPQLKRLSQEFEKNRYLDELRRKKLATELDLRESQVKIWFQNKRAKTKKAS) is a DNA-binding region (homeobox).

This sequence belongs to the engrailed homeobox family.

The protein resides in the nucleus. The chain is Homeobox protein engrailed-like SMOX-2 (SMOX-2) from Schistosoma mansoni (Blood fluke).